We begin with the raw amino-acid sequence, 95 residues long: Histone-like DNA-binding protein (95 aa).

Belongs to the bacterial histone-like protein family.

This Rickettsia montanensis protein is Histone-like DNA-binding protein.